We begin with the raw amino-acid sequence, 309 residues long: Partitioning defective protein 6 (309 aa).

Positions 14–96 (TLQVKSKFDS…PLLRLLIQRR (83 aa)) constitute a PB1 domain. The 18-residue stretch at 132-149 (ISNPEDFRQVSAIIDVDI) folds into the Pseudo-CRIB domain. Residues 156-249 (RVRLCKHGQE…NLIITVKPAN (94 aa)) form the PDZ domain. Positions 249-270 (NQRNTLSRGPSQQGTPNASEMS) are enriched in polar residues. The tract at residues 249–309 (NQRNTLSRGP…DANDSDSGED (61 aa)) is disordered.

It belongs to the PAR6 family. In terms of assembly, interacts with par-3, required for its peripheral localization, and with cdc-42, required for the activation of a par-3/par-6/pkc-3 complex. Colocalized with par-3 at all stages in early embryos, at the anterior cortex of the embryo. Patchy expression observed at the periphery after completion of meiosis I and in meiosis II, which on completion of metaphase II, is restricted to the anterior 85% of embryo length; this decreases to 55% in embryos between prophase and telophase of the first mitosis. During the first cleavage, expression is detected in the advancing furrow. Along with pkc-3, is unable to associate with the apical cortex of cells that lack par-3. Transiently coexpressed and colocalized with par-3 and pkc-3, asymmetrically in the developing somatic gonad, including the spermathecal precursor cells of L4 larvae.

It localises to the cytoplasm. Its subcellular location is the cell membrane. The protein localises to the cell junction. It is found in the tight junction. Its function is as follows. Necessary for apicobasal and anterior-posterior asymmetries associated with cell adhesion and gastrulation during the first few cell cycles of embryogenesis. Required for localizing/ maintaining par-3 at the cell periphery. Regulates mes-1 expression and/or localization pattern during early embryogenesis. Acts together with par-3 and pkc-3 in maintaining epithelial cell polarity in the distal spermatheca. Plays a role in endosome and Golgi body positioning. This Caenorhabditis elegans protein is Partitioning defective protein 6.